Here is a 265-residue protein sequence, read N- to C-terminus: Metal-activated transcriptional activator protein AMT1 (265 aa).

Residues 1–40 (MVVINGVKYACDSCIKSHKAAQCEHNDRPLKILKPRGRPP) constitute a DNA-binding region (copper-fist). Cysteine 11, cysteine 14, cysteine 23, and histidine 25 together coordinate Zn(2+). The tract at residues 103-129 (RRKRTQKSNKKDNLSINSPTNNSPSPA) is disordered. Low complexity predominate over residues 119–128 (NSPTNNSPSP).

Its subcellular location is the nucleus. In terms of biological role, trans-acting regulatory protein that activates transcription of the MT genes (metallothionein) in response to copper or silver ions. This Candida glabrata (strain ATCC 2001 / BCRC 20586 / JCM 3761 / NBRC 0622 / NRRL Y-65 / CBS 138) (Yeast) protein is Metal-activated transcriptional activator protein AMT1 (AMT1).